Consider the following 459-residue polypeptide: Glycerol-3-phosphate acyltransferase, chloroplastic (459 aa).

Residues Met1–Ser90 constitute a chloroplast transit peptide. An HXXXXD motif motif is present at residues His229–Asp234.

It belongs to the GPAT/DAPAT family.

Its subcellular location is the plastid. The protein resides in the chloroplast stroma. The enzyme catalyses sn-glycerol 3-phosphate + an acyl-CoA = a 1-acyl-sn-glycero-3-phosphate + CoA. It functions in the pathway phospholipid metabolism; CDP-diacylglycerol biosynthesis; CDP-diacylglycerol from sn-glycerol 3-phosphate: step 1/3. Its function is as follows. Esterifies acyl-group from acyl-ACP to the sn-1 position of glycerol-3-phosphate. The enzyme from chilling-resistant plants discriminates against non-fluid palmitic acid and selects oleic acid whereas the enzyme from sensitive plants accepts both fatty acids. This is an oleate-selective acyltransferase. This Arabidopsis thaliana (Mouse-ear cress) protein is Glycerol-3-phosphate acyltransferase, chloroplastic (ATS1).